The primary structure comprises 135 residues: Phosphomevalonate dehydratase small subunit (135 aa).

S67 acts as the Proton acceptor in catalysis.

It belongs to the AcnX type II small subunit family. As to quaternary structure, heterodimer composed of a large subunit (PMDh-L) and a small subunit (PMDh-S).

The catalysed reaction is (R)-5-phosphomevalonate = (2E)-3-methyl-5-phosphooxypent-2-enoate + H2O. Its pathway is isoprenoid biosynthesis; isopentenyl diphosphate biosynthesis via mevalonate pathway. Functionally, component of a hydro-lyase that catalyzes the dehydration of mevalonate 5-phosphate (MVA5P) to form trans-anhydromevalonate 5-phosphate (tAHMP). Involved in the archaeal mevalonate (MVA) pathway, which provides fundamental precursors for isoprenoid biosynthesis, such as isopentenyl diphosphate (IPP) and dimethylallyl diphosphate (DMAPP). This chain is Phosphomevalonate dehydratase small subunit, found in Methanopyrus kandleri (strain AV19 / DSM 6324 / JCM 9639 / NBRC 100938).